The chain runs to 278 residues: Urease accessory protein UreD (278 aa).

It belongs to the UreD family. As to quaternary structure, ureD, UreF and UreG form a complex that acts as a GTP-hydrolysis-dependent molecular chaperone, activating the urease apoprotein by helping to assemble the nickel containing metallocenter of UreC. The UreE protein probably delivers the nickel.

It localises to the cytoplasm. Required for maturation of urease via the functional incorporation of the urease nickel metallocenter. The polypeptide is Urease accessory protein UreD (Staphylococcus epidermidis (strain ATCC 12228 / FDA PCI 1200)).